Reading from the N-terminus, the 391-residue chain is tRNA-specific 2-thiouridylase MnmA (391 aa).

Residues 9-16 and Met-35 each bind ATP; that span reads GMSGGVDS. Residues 95–97 are interaction with target base in tRNA; that stretch reads NPD. Cys-100 serves as the catalytic Nucleophile. Cys-100 and Cys-196 form a disulfide bridge. Position 124 (Gly-124) interacts with ATP. The interval 146–148 is interaction with tRNA; sequence KDQ. Catalysis depends on Cys-196, which acts as the Cysteine persulfide intermediate. Positions 308–309 are interaction with tRNA; sequence RY.

This sequence belongs to the MnmA/TRMU family.

It is found in the cytoplasm. It catalyses the reaction S-sulfanyl-L-cysteinyl-[protein] + uridine(34) in tRNA + AH2 + ATP = 2-thiouridine(34) in tRNA + L-cysteinyl-[protein] + A + AMP + diphosphate + H(+). Functionally, catalyzes the 2-thiolation of uridine at the wobble position (U34) of tRNA, leading to the formation of s(2)U34. This chain is tRNA-specific 2-thiouridylase MnmA, found in Burkholderia cenocepacia (strain HI2424).